The sequence spans 334 residues: Tryptophan--tRNA ligase (334 aa).

ATP is bound by residues 11–13 and 19–20; these read QPS and GN. Residues 12 to 20 carry the 'HIGH' region motif; that stretch reads PSGELTIGN. D135 is an L-tryptophan binding site. Residues 147–149, V186, and 195–199 each bind ATP; these read GED and KMSKS. The short motif at 195–199 is the 'KMSKS' region element; it reads KMSKS.

It belongs to the class-I aminoacyl-tRNA synthetase family. In terms of assembly, homodimer.

The protein localises to the cytoplasm. It catalyses the reaction tRNA(Trp) + L-tryptophan + ATP = L-tryptophyl-tRNA(Trp) + AMP + diphosphate + H(+). Its function is as follows. Catalyzes the attachment of tryptophan to tRNA(Trp). Amino acylates tRNA(Trp) with both L- and D-tryptophan, although D-tryptophan is a poor substrate. This Escherichia coli (strain K12) protein is Tryptophan--tRNA ligase.